A 360-amino-acid chain; its full sequence is Photosystem II protein D1 1 (360 aa).

Transmembrane regions (helical) follow at residues 29–46, 118–133, and 142–156; these read YVGW…TAAI, HFLI…QWEL, and WIPV…AATA. Residue H118 coordinates chlorophyll a. Pheophytin a is bound at residue Y126. [CaMn4O5] cluster contacts are provided by D170 and E189. A helical membrane pass occupies residues 197–218; sequence FHMIGVAGVFGGALFSAMHGSL. H198 contributes to the chlorophyll a binding site. A quinone contacts are provided by residues H215 and 264 to 265; that span reads SF. Residue H215 coordinates Fe cation. Position 272 (H272) interacts with Fe cation. Residues 274-288 traverse the membrane as a helical segment; that stretch reads FLAAWPVIGIWFAAL. [CaMn4O5] cluster is bound by residues H332, E333, D342, and A344. A propeptide spanning residues 345–360 is cleaved from the precursor; that stretch reads SGEVQPIALAAPAIAS.

It belongs to the reaction center PufL/M/PsbA/D family. PSII is composed of 1 copy each of membrane proteins PsbA, PsbB, PsbC, PsbD, PsbE, PsbF, PsbH, PsbI, PsbJ, PsbK, PsbL, PsbM, PsbT, PsbX, PsbY, PsbZ, Psb30/Ycf12, peripheral proteins PsbO, CyanoQ (PsbQ), PsbU, PsbV and a large number of cofactors. It forms dimeric complexes. The D1/D2 heterodimer binds P680, chlorophylls that are the primary electron donor of PSII, and subsequent electron acceptors. It shares a non-heme iron and each subunit binds pheophytin, quinone, additional chlorophylls, carotenoids and lipids. D1 provides most of the ligands for the Mn4-Ca-O5 cluster of the oxygen-evolving complex (OEC). There is also a Cl(-1) ion associated with D1 and D2, which is required for oxygen evolution. The PSII complex binds additional chlorophylls, carotenoids and specific lipids. is required as a cofactor. In terms of processing, tyr-161 forms a radical intermediate that is referred to as redox-active TyrZ, YZ or Y-Z. C-terminally processed by CtpA; processing is essential to allow assembly of the oxygen-evolving complex and thus photosynthetic growth.

It localises to the cellular thylakoid membrane. It carries out the reaction 2 a plastoquinone + 4 hnu + 2 H2O = 2 a plastoquinol + O2. Photosystem II (PSII) is a light-driven water:plastoquinone oxidoreductase that uses light energy to abstract electrons from H(2)O, generating O(2) and a proton gradient subsequently used for ATP formation. It consists of a core antenna complex that captures photons, and an electron transfer chain that converts photonic excitation into a charge separation. The D1/D2 (PsbA/PsbD) reaction center heterodimer binds P680, the primary electron donor of PSII as well as several subsequent electron acceptors. In Trichormus variabilis (strain ATCC 29413 / PCC 7937) (Anabaena variabilis), this protein is Photosystem II protein D1 1.